The primary structure comprises 259 residues: Truncated Ankyrin repeat protein OPG003 (259 aa).

It belongs to the orthopoxvirus OPG003 family.

The protein is Truncated Ankyrin repeat protein OPG003 (OPG003) of Vaccinia virus (strain Copenhagen) (VACV).